The primary structure comprises 462 residues: uncharacterized protein (462 aa).

Helical transmembrane passes span 381 to 401 (WILG…FKGM) and 433 to 453 (LWIL…NLYI).

The protein resides in the cell membrane. This is an uncharacterized protein from Methanocaldococcus jannaschii (strain ATCC 43067 / DSM 2661 / JAL-1 / JCM 10045 / NBRC 100440) (Methanococcus jannaschii).